Reading from the N-terminus, the 317-residue chain is Melanocyte-stimulating hormone receptor (317 aa).

Topologically, residues 1–37 (MPVQGSQRRLLGSLNSTPTATPHLGLAANQTGARCLE) are extracellular. The N-linked (GlcNAc...) asparagine glycan is linked to Asn29. Residues 38 to 63 (VSIPDGLFLSLGLVSLVENVLVVTAI) form a helical membrane-spanning segment. The Cytoplasmic segment spans residues 64–72 (AKNRNLHSP). A helical transmembrane segment spans residues 73-93 (MYCFICCLALSDLLVSGSNML). Residues 94–118 (ETAVILLLEAGALAARAAVVQQLDN) are Extracellular-facing. Residues 119-140 (VIDVITCSSMLSSLCFLGAIAV) traverse the membrane as a helical segment. Residues 141–163 (DRYISIFYALRYHSIVTLPRARR) are Cytoplasmic-facing. The helical transmembrane segment at 164 to 183 (AVAAIWVASVLFSMLFIAYY) threads the bilayer. The Extracellular segment spans residues 184–191 (DHAAVLLC). The helical transmembrane segment at 192–211 (LVVFFLAMLVLMAVLYVHML) threads the bilayer. Residues 212-240 (ARACQHAQGIARLHKRQRPAHQSFGLKGA) are Cytoplasmic-facing. Residues 241–266 (ATLTILLGIFFLCWGPFFLHLTLIVL) form a helical membrane-spanning segment. The Extracellular portion of the chain corresponds to 267–279 (CPQHPTCSCIFKN). A helical membrane pass occupies residues 280–300 (FNLFLTLIICNAIIDPLIYAF). The Cytoplasmic segment spans residues 301-317 (RSQELRRTLKEVLLCSW). Cys315 carries S-palmitoyl cysteine lipidation.

The protein belongs to the G-protein coupled receptor 1 family. Interacts with MGRN1, but does not undergo MGRN1-mediated ubiquitination; this interaction competes with GNAS-binding and thus inhibits agonist-induced cAMP production. Interacts with OPN3; the interaction results in a decrease in MC1R-mediated cAMP signaling and ultimately a decrease in melanin production in melanocytes.

The protein resides in the cell membrane. Functionally, receptor for MSH (alpha, beta and gamma) and ACTH. The activity of this receptor is mediated by G proteins which activate adenylate cyclase. Mediates melanogenesis, the production of eumelanin (black/brown) and phaeomelanin (red/yellow), via regulation of cAMP signaling in melanocytes. This chain is Melanocyte-stimulating hormone receptor (MC1R), found in Erythrocebus patas (Red guenon).